The chain runs to 199 residues: dITP/XTP pyrophosphatase (199 aa).

7 to 12 (TGNAGK) contributes to the substrate binding site. Residue D68 is the Proton acceptor of the active site. Residue D68 coordinates Mg(2+). Substrate contacts are provided by residues S69, 153–156 (FGYD), K176, and 181–182 (HR).

The protein belongs to the HAM1 NTPase family. As to quaternary structure, homodimer. It depends on Mg(2+) as a cofactor.

It catalyses the reaction XTP + H2O = XMP + diphosphate + H(+). The enzyme catalyses dITP + H2O = dIMP + diphosphate + H(+). It carries out the reaction ITP + H2O = IMP + diphosphate + H(+). In terms of biological role, pyrophosphatase that catalyzes the hydrolysis of nucleoside triphosphates to their monophosphate derivatives, with a high preference for the non-canonical purine nucleotides XTP (xanthosine triphosphate), dITP (deoxyinosine triphosphate) and ITP. Seems to function as a house-cleaning enzyme that removes non-canonical purine nucleotides from the nucleotide pool, thus preventing their incorporation into DNA/RNA and avoiding chromosomal lesions. This is dITP/XTP pyrophosphatase from Halorhodospira halophila (strain DSM 244 / SL1) (Ectothiorhodospira halophila (strain DSM 244 / SL1)).